Here is a 182-residue protein sequence, read N- to C-terminus: Large ribosomal subunit protein eL15 (182 aa).

It belongs to the eukaryotic ribosomal protein eL15 family.

The polypeptide is Large ribosomal subunit protein eL15 (rpl15e) (Methanothermobacter thermautotrophicus (strain ATCC 29096 / DSM 1053 / JCM 10044 / NBRC 100330 / Delta H) (Methanobacterium thermoautotrophicum)).